We begin with the raw amino-acid sequence, 274 residues long: Penicillin-insensitive murein endopeptidase (274 aa).

Positions 1-19 are cleaved as a signal peptide; sequence MNKTAIALLALLASSASLA. Disulfide bonds link Cys-44–Cys-265, Cys-187–Cys-235, and Cys-216–Cys-223. Residues His-110, His-113, Asp-120, Asp-147, His-150, and His-211 each contribute to the Zn(2+) site. The disordered stretch occupies residues 228–264; sequence LPPPGDGCGAELQSWFAPPKPGTTKPEKKTPSPLPPS.

The protein belongs to the peptidase M74 family. In terms of assembly, dimer. The cofactor is Zn(2+).

The protein resides in the periplasm. In terms of biological role, murein endopeptidase that cleaves the D-alanyl-meso-2,6-diamino-pimelyl amide bond that connects peptidoglycan strands. Likely plays a role in the removal of murein from the sacculus. In Escherichia coli (strain 55989 / EAEC), this protein is Penicillin-insensitive murein endopeptidase.